The following is a 402-amino-acid chain: Acetate kinase (402 aa).

A Mg(2+)-binding site is contributed by asparagine 10. Lysine 17 contributes to the ATP binding site. Arginine 89 is a binding site for substrate. Aspartate 148 functions as the Proton donor/acceptor in the catalytic mechanism. ATP-binding positions include 208 to 212, 283 to 285, and 334 to 338; these read HLGNG, DCR, and GIGEN. Glutamate 389 is a binding site for Mg(2+).

Belongs to the acetokinase family. As to quaternary structure, homodimer. It depends on Mg(2+) as a cofactor. Requires Mn(2+) as cofactor.

The protein localises to the cytoplasm. The catalysed reaction is acetate + ATP = acetyl phosphate + ADP. It functions in the pathway metabolic intermediate biosynthesis; acetyl-CoA biosynthesis; acetyl-CoA from acetate: step 1/2. Catalyzes the formation of acetyl phosphate from acetate and ATP. Can also catalyze the reverse reaction. This chain is Acetate kinase, found in Actinobacillus pleuropneumoniae serotype 7 (strain AP76).